A 306-amino-acid polypeptide reads, in one-letter code: MPSLPVLIDTTTEFDVSSPQNVTQKRSLLLAPPSIAAHEEKLRDIFTTFDRSVTDLQMLDRLSAGFVTLPASTYDLVLVLTDTNGARRNEALELLTRDIFNILTPSMKPSAQLQLQDGPFQANEGREAILAGLVEKHGAFEKPQYQEAAVPLRFGANKRKNKISPEPVKIESVGFVDNYDDDELINEDDLLDEEDLGKPVQQPAECQPETAKKRRRACKDCTCGLAAQLEAEDAERREKANADLNVLKLKTDELNDEVDFTVQGKTGSCNSCSLGDAFRCASCPFIGLPAFKPGEEVRIMNDMAQL.

Residues 21 to 150 (NVTQKRSLLL…EKPQYQEAAV (130 aa)) form an N-terminal SAM-like domain region. Positions 151–196 (PLRFGANKRKNKISPEPVKIESVGFVDNYDDDELINEDDLLDEEDL) are linker. [2Fe-2S] cluster contacts are provided by cysteine 206, cysteine 218, cysteine 221, and cysteine 223. Residues 206-223 (CQPETAKKRRRACKDCTC) are fe-S binding site A. Residues cysteine 269, cysteine 272, cysteine 280, and cysteine 283 each contribute to the [4Fe-4S] cluster site. 2 consecutive short sequence motifs (cx2C motif) follow at residues 269–272 (CNSC) and 280–283 (CASC). Residues 269–283 (CNSCSLGDAFRCASC) are fe-S binding site B.

Belongs to the anamorsin family. As to quaternary structure, monomer. Interacts with tah18. Interacts with mia40. [2Fe-2S] cluster serves as cofactor. It depends on [4Fe-4S] cluster as a cofactor.

Its subcellular location is the cytoplasm. The protein localises to the mitochondrion intermembrane space. In terms of biological role, component of the cytosolic iron-sulfur (Fe-S) protein assembly (CIA) machinery required for the maturation of extramitochondrial Fe-S proteins. Part of an electron transfer chain functioning in an early step of cytosolic Fe-S biogenesis, facilitating the de novo assembly of a [4Fe-4S] cluster on the scaffold complex cfd1-nbp35. Electrons are transferred to dre2 from NADPH via the FAD- and FMN-containing protein tah18. Tah18-dre2 are also required for the assembly of the diferric tyrosyl radical cofactor of ribonucleotide reductase (RNR), probably by providing electrons for reduction during radical cofactor maturation in the catalytic small subunit rnr2. The sequence is that of Fe-S cluster assembly protein dre2 from Talaromyces stipitatus (strain ATCC 10500 / CBS 375.48 / QM 6759 / NRRL 1006) (Penicillium stipitatum).